Here is a 321-residue protein sequence, read N- to C-terminus: Glycerol-3-phosphate phosphatase (321 aa).

The active-site Nucleophile is aspartate 34. Aspartate 34, aspartate 36, and aspartate 260 together coordinate Mg(2+). Aspartate 36 acts as the Proton donor in catalysis.

This sequence belongs to the HAD-like hydrolase superfamily. CbbY/CbbZ/Gph/YieH family. As to quaternary structure, homodimer. Mg(2+) serves as cofactor. In terms of tissue distribution, ubiquitously expressed with higher expression in testis, heart, skeletal muscle and islet tissue (at protein level).

It carries out the reaction O-phospho-L-tyrosyl-[protein] + H2O = L-tyrosyl-[protein] + phosphate. The catalysed reaction is sn-glycerol 1-phosphate + H2O = glycerol + phosphate. It catalyses the reaction sn-glycerol 3-phosphate + H2O = glycerol + phosphate. With respect to regulation, inhibited by orthovanadate, beryllium trifluoride, Ca(2+) and EDTA. In terms of biological role, glycerol-3-phosphate phosphatase hydrolyzing glycerol-3-phosphate into glycerol. Thereby, regulates the cellular levels of glycerol-3-phosphate a metabolic intermediate of glucose, lipid and energy metabolism. Was also shown to have a 2-phosphoglycolate phosphatase activity and a tyrosine-protein phosphatase activity. However, their physiological relevance is unclear. In vitro, also has a phosphatase activity toward ADP, ATP, GDP and GTP. The chain is Glycerol-3-phosphate phosphatase from Mus musculus (Mouse).